Consider the following 118-residue polypeptide: Large ribosomal subunit protein bL20 (118 aa).

It belongs to the bacterial ribosomal protein bL20 family.

Functionally, binds directly to 23S ribosomal RNA and is necessary for the in vitro assembly process of the 50S ribosomal subunit. It is not involved in the protein synthesizing functions of that subunit. The polypeptide is Large ribosomal subunit protein bL20 (Lactobacillus delbrueckii subsp. bulgaricus (strain ATCC BAA-365 / Lb-18)).